The following is a 71-amino-acid chain: VLIIAVLFLTACQLTTAETSSRGKQKHRALRSTDKNSRMTKRCTAPGGACYAAYTCCSNACNLNTKKCVLS.

Positions 1-17 (VLIIAVLFLTACQLTTA) are cleaved as a signal peptide. Positions 18–40 (ETSSRGKQKHRALRSTDKNSRMT) are excised as a propeptide. 3 disulfide bridges follow: C43-C57, C50-C61, and C56-C68.

The protein belongs to the conotoxin O1 superfamily. Expressed by the venom duct.

The protein localises to the secreted. This Conus abbreviatus (Abbreviated cone) protein is Conotoxin AbVIG.